Here is a 153-residue protein sequence, read N- to C-terminus: Peptide methionine sulfoxide reductase B6 (153 aa).

A MsrB domain is found at 28–149; it reads NEEWRTVLSP…NSVALKFSSA (122 aa). C67, C70, C113, and C116 together coordinate Zn(2+). An intrachain disulfide couples C85 to C138. The active-site Nucleophile is C138.

The protein belongs to the MsrB Met sulfoxide reductase family. Requires Zn(2+) as cofactor.

Its subcellular location is the cytoplasm. It is found in the cytosol. The catalysed reaction is L-methionyl-[protein] + [thioredoxin]-disulfide + H2O = L-methionyl-(R)-S-oxide-[protein] + [thioredoxin]-dithiol. Functionally, catalyzes the reduction of methionine sulfoxide (MetSO) to methionine in proteins. Plays a protective role against oxidative stress by restoring activity to proteins that have been inactivated by methionine oxidation. MSRB family specifically reduces the MetSO R-enantiomer. This is Peptide methionine sulfoxide reductase B6 (MSRB6) from Arabidopsis thaliana (Mouse-ear cress).